Consider the following 57-residue polypeptide: Large ribosomal subunit protein bL32 (57 aa).

Positions 1–19 (MAVPKRRMSRSNTRSRRSQ) are enriched in basic residues. The segment at 1–22 (MAVPKRRMSRSNTRSRRSQWKA) is disordered.

This sequence belongs to the bacterial ribosomal protein bL32 family.

In Rhodococcus jostii (strain RHA1), this protein is Large ribosomal subunit protein bL32.